Here is a 578-residue protein sequence, read N- to C-terminus: Multidrug resistance-like ATP-binding protein MdlB (578 aa).

The region spanning 25 to 308 (LILGFTLLLF…ITSQQSIFQQ (284 aa)) is the ABC transmembrane type-1 domain. 6 helical membrane passes run 26 to 46 (ILGFTLLLFSSIFEVLNPILI), 59 to 79 (VNYSLKIITYYLILQILAAIL), 143 to 163 (SLFQNIILILITLITMFILEW), 166 to 186 (ACIASIIFPIALIIMLLYQYF), 196 to 216 (VYIANIYNIFNEIINGIDVIQ), and 260 to 280 (LILCGLILIFGIYPIGFFEIG). One can recognise an ABC transporter domain in the interval 339–573 (IKVKNLYFSY…KSYYKNMYYS (235 aa)). Residue 373–380 (GRTGSGKS) participates in ATP binding.

Belongs to the ABC transporter superfamily. Drug exporter-2 (TC 3.A.1.117) family.

It is found in the cell membrane. The catalysed reaction is ATP + H2O + xenobioticSide 1 = ADP + phosphate + xenobioticSide 2.. The polypeptide is Multidrug resistance-like ATP-binding protein MdlB (mdlB) (Buchnera aphidicola subsp. Baizongia pistaciae (strain Bp)).